A 730-amino-acid chain; its full sequence is Multifunctional procollagen lysine hydroxylase and glycosyltransferase (730 aa).

The signal sequence occupies residues 1-16 (MRVLPFLLPLIPVLLA). The interval 20 to 280 (TDLPELVVVT…CGLEVKESEE (261 aa)) is required for glycosyltransferase activity. UDP is bound by residues 30–32 (VAT) and 98–100 (DAY). Residues Asp-98, Asp-101, and His-242 each contribute to the Mn(2+) site. 245-248 (GPSK) is a UDP binding site. Cys-268 and Cys-271 are oxidised to a cystine. Residues 281 to 507 (VPLIALNLFI…YYGFLIVSDE (227 aa)) are accessory region. A disulfide bridge connects residues Cys-554 and Cys-690. Arg-590 and Tyr-648 together coordinate 2-oxoglutarate. A Fe2OG dioxygenase domain is found at 639-730 (ESNMMFVVRY…RYIMVSFINP (92 aa)). The Fe cation site is built by His-659 and Asp-661. An important for dimerization region spans residues 664 to 707 (TFSIDIALNKKGRDYEGGGVRYIRYNCTVPADEVGYAMMFPGRL). The N-linked (GlcNAc...) asparagine glycan is linked to Asn-689. His-711 contacts Fe cation. 2-oxoglutarate is bound at residue Arg-721.

Homodimer. It depends on Fe(2+) as a cofactor. L-ascorbate is required as a cofactor. The cofactor is Mn(2+).

Its subcellular location is the rough endoplasmic reticulum. It is found in the endoplasmic reticulum lumen. The protein resides in the endoplasmic reticulum membrane. The protein localises to the secreted. It localises to the extracellular space. It catalyses the reaction L-lysyl-[collagen] + 2-oxoglutarate + O2 = (5R)-5-hydroxy-L-lysyl-[collagen] + succinate + CO2. The enzyme catalyses (5R)-5-hydroxy-L-lysyl-[collagen] + UDP-alpha-D-galactose = (5R)-5-O-(beta-D-galactosyl)-5-hydroxy-L-lysyl-[collagen] + UDP + H(+). It carries out the reaction (5R)-5-O-(beta-D-galactosyl)-5-hydroxy-L-lysyl-[collagen] + UDP-alpha-D-glucose = (5R)-5-O-[alpha-D-glucosyl-(1-&gt;2)-beta-D-galactosyl]-5-hydroxy-L-lysyl-[collagen] + UDP + H(+). Multifunctional enzyme that catalyzes a series of post-translational modifications on Lys residues in procollagen. Catalyzes the formation of hydroxylysine residues in -Xaa-Lys-Gly- sequences in type IV collagens. Transfers galactose onto hydroxylysine groups, giving rise to galactosyl 5-hydroxylysine. Catalyzes the subsequent transfer of glucose moieties, giving rise to 1,2-glucosylgalactosyl-5-hydroxylysine residues. Essential for normal biosynthesis and secretion of type IV collagens. Essential for normal stability of the basement membrane. In Caenorhabditis elegans, this protein is Multifunctional procollagen lysine hydroxylase and glycosyltransferase (let-268).